The chain runs to 275 residues: Voltage-dependent calcium channel gamma-5 subunit (275 aa).

The next 4 membrane-spanning stretches (helical) occupy residues 8-28, 103-123, 129-149, and 176-196; these read ALTLLSSVFAVCGLGLLGIAV, FPLVSLFFMFIGFILNNIGHI, ILAFVSGIFFILSGLSLVVGL, and GWSFAFAAISFLLTESAGVMS.

Belongs to the PMP-22/EMP/MP20 family. CACNG subfamily. In terms of assembly, the L-type calcium channel is composed of five subunits: alpha-1, alpha-2/delta, beta and gamma. Acts as an auxiliary subunit for AMPA-selective glutamate receptors (AMPARs). Found in a complex with GRIA1, GRIA2, GRIA3, GRIA4, CNIH2, CNIH3, CACNG2, CACNG3, CACNG4, CACNG7 and CACNG8. Interacts with GRIA1, GRIA2, GRIA3 and GRIA4.

It is found in the membrane. Its subcellular location is the postsynaptic density membrane. Regulates the gating properties of AMPA-selective glutamate receptors (AMPARs). Modulates their gating properties by accelerating their rates of activation, deactivation and desensitization. Displays subunit-specific AMPA receptor regulation. Shows specificity for GRIA1, GRIA4 and the long isoform of GRIA2. Thought to stabilize the calcium channel in an inactivated (closed) state. In Homo sapiens (Human), this protein is Voltage-dependent calcium channel gamma-5 subunit (CACNG5).